Consider the following 548-residue polypeptide: Frizzled-7 (548 aa).

The N-terminal stretch at 1–19 (MFATVSLLFCLLLQPSPSA) is a signal peptide. The Extracellular portion of the chain corresponds to 20–230 (QQYHGEKGIS…EEEVRFARLW (211 aa)). One can recognise an FZ domain in the interval 31 to 150 (PDHGFCQPIS…HGAGEICVGQ (120 aa)). Intrachain disulfides connect C36–C97, C44–C90, C81–C118, C107–C147, and C111–C135. N-linked (GlcNAc...) asparagine glycosylation is present at N50. N-linked (GlcNAc...) asparagine glycosylation occurs at N151. A helical membrane pass occupies residues 231–251 (VGIWAILCGISTLFTVLTYLV). At 252–262 (DMRRFSYPERP) the chain is on the cytoplasmic side. The helical transmembrane segment at 263–283 (IIFLSGCYFMVAVAYTAGFLL) threads the bilayer. At 284 to 310 (EERGVCVERFSEDSYRTVAQGTKKEGC) the chain is on the extracellular side. The chain crosses the membrane as a helical span at residues 311–331 (TILFMILYFFGMASSIWWVIL). The Cytoplasmic segment spans residues 332-353 (SLTWFLAAGMKWGHEAIEANSQ). Residues 354 to 374 (YFHLAAWAVPAVKTITILAMG) form a helical membrane-spanning segment. Topologically, residues 375–397 (QVDGDILSGVCYVGINSVDSLRG) are extracellular. The helical transmembrane segment at 398-418 (FVLAPLFVYLFIGTSFLLAGF) threads the bilayer. Residues 419-444 (VSLFRIRTIMKHDGTKTEKLEKLMVR) are Cytoplasmic-facing. A helical membrane pass occupies residues 445 to 465 (IGVFSVMYTVPATIVLACYFY). The Extracellular segment spans residues 466 to 502 (EQAFRDTWEKTWLVQTCKGFAVPCPNYNFAPMSPDFT). Residues 503–523 (VFMIKYLMTMIVGITSSFWIW) form a helical membrane-spanning segment. The Cytoplasmic portion of the chain corresponds to 524–548 (SGKTLQSWRRFYHRLSNGGKGETAV). The Lys-Thr-X-X-X-Trp motif, mediates interaction with the PDZ domain of Dvl family members motif lies at 526–531 (KTLQSW). Positions 546 to 548 (TAV) match the PDZ-binding motif.

The protein belongs to the G-protein coupled receptor Fz/Smo family. As to quaternary structure, interacts with wnt11 and sdc4. The extracellular domain interacts with the extracellular domain of pcdh8/papc.

It localises to the cell membrane. Its subcellular location is the endosome membrane. In terms of biological role, receptor for Wnt proteins. Acts in both canonical and non-canonical Wnt pathways. Although different papers report differing Wnt preferences, wnt5a, wnt8b and wnt11 have been proposed as synergists. In the canonical Wnt pathway, acts via beta-catenin to promote the expression of the dorsal genes siamois, twin and nodal3 and to establish the dorsal axis of the embryo and induce dorsal mesoderm formation. In a non-canonical Wnt/planar cell polarity (PCP) pathway, acts with sdc4 and dvl2/dsh to regulate convergent extension movements in gastrulation. Triggers phosphorylation of dvl2/dsh and its translocation to the plasma membrane. In a third branch of Wnt signaling, acts in a non-canonical pathway via trimeric G proteins, and independently of dvl2/dsh, to recruit protein kinase C (PKC) to the membrane and thus activate PKC. PKC signaling controls cell sorting and tissue separation during gastrulation. This Xenopus tropicalis (Western clawed frog) protein is Frizzled-7.